A 232-amino-acid polypeptide reads, in one-letter code: Ribonuclease 3 (232 aa).

Residues Glu-5–Gly-134 enclose the RNase III domain. Glu-47 is a binding site for Mg(2+). The active site involves Asp-51. The Mg(2+) site is built by Asp-120 and Glu-123. Glu-123 is a catalytic residue. The 70-residue stretch at Asp-160–His-229 folds into the DRBM domain.

Belongs to the ribonuclease III family. Homodimer. It depends on Mg(2+) as a cofactor.

The protein resides in the cytoplasm. It catalyses the reaction Endonucleolytic cleavage to 5'-phosphomonoester.. Functionally, digests double-stranded RNA. Involved in the processing of primary rRNA transcript to yield the immediate precursors to the large and small rRNAs (23S and 16S). Processes some mRNAs, and tRNAs when they are encoded in the rRNA operon. Processes pre-crRNA and tracrRNA of type II CRISPR loci if present in the organism. The polypeptide is Ribonuclease 3 (Streptococcus gordonii (strain Challis / ATCC 35105 / BCRC 15272 / CH1 / DL1 / V288)).